The chain runs to 108 residues: Replication initiation control protein YabA (108 aa).

Zn(2+) is bound by residues H82, C84, C98, and C101.

This sequence belongs to the YabA family. As to quaternary structure, homotetramer. Interacts with both DnaA and DnaN, acting as a bridge between these two proteins. The cofactor is Zn(2+).

It localises to the cytoplasm. The protein resides in the nucleoid. Its function is as follows. Involved in control of chromosome replication initiation. Inhibits the cooperative binding of DnaA to the oriC region, thus negatively regulating initiation of chromosome replication. Inhibits the ability of DnaA-ATP to form a helix on DNA; does not disassemble preformed DnaA-DNA helices. Decreases the residence time of DnaA on the chromosome at its binding sites (oriC, replication forks and promoter-binding sites). Tethers DnaA to the replication machinery via the DNA polymerase beta sliding clamp subunit (dnaN). Associates with oriC and other DnaA targets on the chromosome in a DnaA-dependent manner. The sequence is that of Replication initiation control protein YabA from Streptococcus agalactiae serotype Ia (strain ATCC 27591 / A909 / CDC SS700).